A 373-amino-acid chain; its full sequence is Histidinol-phosphate aminotransferase (373 aa).

The residue at position 229 (Lys229) is an N6-(pyridoxal phosphate)lysine.

It belongs to the class-II pyridoxal-phosphate-dependent aminotransferase family. Histidinol-phosphate aminotransferase subfamily. The cofactor is pyridoxal 5'-phosphate.

The catalysed reaction is L-histidinol phosphate + 2-oxoglutarate = 3-(imidazol-4-yl)-2-oxopropyl phosphate + L-glutamate. It functions in the pathway amino-acid biosynthesis; L-histidine biosynthesis; L-histidine from 5-phospho-alpha-D-ribose 1-diphosphate: step 7/9. This is Histidinol-phosphate aminotransferase (hisC) from Methanothermobacter thermautotrophicus (strain ATCC 29096 / DSM 1053 / JCM 10044 / NBRC 100330 / Delta H) (Methanobacterium thermoautotrophicum).